The following is a 229-amino-acid chain: Uracil-DNA glycosylase (229 aa).

Asp-72 functions as the Proton acceptor in the catalytic mechanism.

It belongs to the uracil-DNA glycosylase (UDG) superfamily. UNG family.

Its subcellular location is the cytoplasm. The enzyme catalyses Hydrolyzes single-stranded DNA or mismatched double-stranded DNA and polynucleotides, releasing free uracil.. In terms of biological role, excises uracil residues from the DNA which can arise as a result of misincorporation of dUMP residues by DNA polymerase or due to deamination of cytosine. The chain is Uracil-DNA glycosylase from Dichelobacter nodosus (strain VCS1703A).